We begin with the raw amino-acid sequence, 534 residues long: Zinc finger protein 703-A (534 aa).

Disordered stretches follow at residues 1 to 35 (MNCS…THPV), 90 to 251 (SQIG…VAPV), and 300 to 320 (QLPG…LTGA). Low complexity-rich tracts occupy residues 15–34 (QSSS…PTHP), 115–124 (RSSSLKLGES), and 146–155 (GSSAGGSADK). A compositionally biased stretch (polar residues) spans 173 to 182 (SPSSRVSSPG). The span at 185–200 (CDSKNNESQEKKEPEA) shows a compositional bias: basic and acidic residues. The segment covering 204-217 (SLETSQANPTLTRA) has biased composition (polar residues). Over residues 218–229 (SISNSSAESSQS) the composition is skewed to low complexity. A compositionally biased stretch (polar residues) spans 230–239 (GDVTPSSKSD). The C2H2-type zinc-finger motif lies at 406–434 (HICNWVSASGPCDKRFATSEELLAHLRTH).

Belongs to the Elbow/Noc family.

It localises to the nucleus. It is found in the cytoplasm. Functionally, transcriptional corepressor which does not bind directly to DNA and may regulate transcription through recruitment of histone deacetylases to gene promoters. Regulates cell adhesion, migration and proliferation. Involved in specification of the lateral neural plate border (NPB). May be required for segmental gene expression during hindbrain development. This chain is Zinc finger protein 703-A (znf703-a), found in Xenopus laevis (African clawed frog).